We begin with the raw amino-acid sequence, 221 residues long: Alpha-ketoglutarate-dependent dioxygenase alkB homolog 7, mitochondrial (221 aa).

The transit peptide at 1-23 (MAGSRRLAMRLLSGCAWVRGSDS) directs the protein to the mitochondrion. Fe cation contacts are provided by histidine 121 and aspartate 123. Tyrosine 165 serves as a coordination point for 2-oxoglutarate. Histidine 177 is a Fe cation binding site. 2-oxoglutarate contacts are provided by residues 197-199 (RIS) and arginine 203.

This sequence belongs to the alkB family. Requires Fe(2+) as cofactor. As to expression, widely expressed.

It localises to the mitochondrion matrix. Functionally, may function as protein hydroxylase; can catalyze auto-hydroxylation at Leu-110 (in vitro), but this activity may be due to the absence of the true substrate. Required to induce programmed necrosis in response to DNA damage caused by cytotoxic alkylating agents. Acts by triggering the collapse of mitochondrial membrane potential and loss of mitochondrial function that leads to energy depletion and cell death. ALKBH7-mediated necrosis is probably required to prevent the accumulation of cells with DNA damage. Does not display DNA demethylase activity. Involved in fatty acid metabolism. This is Alpha-ketoglutarate-dependent dioxygenase alkB homolog 7, mitochondrial (Alkbh7) from Mus musculus (Mouse).